The chain runs to 78 residues: Sec-independent protein translocase protein TatA (78 aa).

Residues 1 to 21 (MGSLSIWHWIVVIAVVLLLFG) form a helical membrane-spanning segment. Positions 43–60 (LQDDEKTAEKSEPVKSID) are enriched in basic and acidic residues. The disordered stretch occupies residues 43 to 78 (LQDDEKTAEKSEPVKSIDHTSTPGATNRTDVGSKAV). Positions 61-72 (HTSTPGATNRTD) are enriched in polar residues.

This sequence belongs to the TatA/E family. As to quaternary structure, the Tat system comprises two distinct complexes: a TatABC complex, containing multiple copies of TatA, TatB and TatC subunits, and a separate TatA complex, containing only TatA subunits. Substrates initially bind to the TatABC complex, which probably triggers association of the separate TatA complex to form the active translocon.

The protein localises to the cell inner membrane. In terms of biological role, part of the twin-arginine translocation (Tat) system that transports large folded proteins containing a characteristic twin-arginine motif in their signal peptide across membranes. TatA could form the protein-conducting channel of the Tat system. This is Sec-independent protein translocase protein TatA from Rhodopseudomonas palustris (strain ATCC BAA-98 / CGA009).